A 270-amino-acid polypeptide reads, in one-letter code: Glucosamine-6-phosphate deaminase (270 aa).

Residue D72 is the Proton acceptor; for enolization step of the active site. Residue D141 is the For ring-opening step of the active site. Residue H143 is the Proton acceptor; for ring-opening step of the active site. Catalysis depends on E148, which acts as the For ring-opening step.

This sequence belongs to the glucosamine/galactosamine-6-phosphate isomerase family. NagB subfamily.

The enzyme catalyses alpha-D-glucosamine 6-phosphate + H2O = beta-D-fructose 6-phosphate + NH4(+). It functions in the pathway amino-sugar metabolism; N-acetylneuraminate degradation; D-fructose 6-phosphate from N-acetylneuraminate: step 5/5. Allosterically activated by N-acetylglucosamine 6-phosphate (GlcNAc6P). Catalyzes the reversible isomerization-deamination of glucosamine 6-phosphate (GlcN6P) to form fructose 6-phosphate (Fru6P) and ammonium ion. In Bacteroides thetaiotaomicron (strain ATCC 29148 / DSM 2079 / JCM 5827 / CCUG 10774 / NCTC 10582 / VPI-5482 / E50), this protein is Glucosamine-6-phosphate deaminase (nagB).